Consider the following 401-residue polypeptide: Ribosomal protein uS12 methylthiotransferase RimO (401 aa).

An MTTase N-terminal domain is found at 1–108; sequence MKINFINLGC…GIELLQTPKR (108 aa). 6 residues coordinate [4Fe-4S] cluster: Cys10, Cys43, Cys72, Cys124, Cys128, and Cys131. A Radical SAM core domain is found at 110–339; the sequence is LTTKHYAYLK…FNLSQEILEE (230 aa).

The protein belongs to the methylthiotransferase family. RimO subfamily. [4Fe-4S] cluster is required as a cofactor.

Its subcellular location is the cytoplasm. The catalysed reaction is L-aspartate(89)-[ribosomal protein uS12]-hydrogen + (sulfur carrier)-SH + AH2 + 2 S-adenosyl-L-methionine = 3-methylsulfanyl-L-aspartate(89)-[ribosomal protein uS12]-hydrogen + (sulfur carrier)-H + 5'-deoxyadenosine + L-methionine + A + S-adenosyl-L-homocysteine + 2 H(+). Catalyzes the methylthiolation of an aspartic acid residue of ribosomal protein uS12. The sequence is that of Ribosomal protein uS12 methylthiotransferase RimO from Hydrogenobaculum sp. (strain Y04AAS1).